The primary structure comprises 700 residues: Elongation factor G (700 aa).

The 283-residue stretch at 8–290 (ERYRNIGISA…AVVEYLPSPV (283 aa)) folds into the tr-type G domain. GTP contacts are provided by residues 17 to 24 (AHIDAGKT), 88 to 92 (DTPGH), and 142 to 145 (NKMD).

It belongs to the TRAFAC class translation factor GTPase superfamily. Classic translation factor GTPase family. EF-G/EF-2 subfamily.

It is found in the cytoplasm. In terms of biological role, catalyzes the GTP-dependent ribosomal translocation step during translation elongation. During this step, the ribosome changes from the pre-translocational (PRE) to the post-translocational (POST) state as the newly formed A-site-bound peptidyl-tRNA and P-site-bound deacylated tRNA move to the P and E sites, respectively. Catalyzes the coordinated movement of the two tRNA molecules, the mRNA and conformational changes in the ribosome. The sequence is that of Elongation factor G from Mannheimia succiniciproducens (strain KCTC 0769BP / MBEL55E).